The chain runs to 129 residues: Ergosterol biosynthetic protein 28 (129 aa).

The next 4 membrane-spanning stretches (helical) occupy residues 4–24 (LGYW…FGFF), 46–66 (TFGV…FNLE), 71–91 (YLAT…EYLF), and 96–116 (TIAN…WMLL).

The protein belongs to the ERG28 family.

The protein localises to the endoplasmic reticulum membrane. The protein is Ergosterol biosynthetic protein 28 of Arabidopsis thaliana (Mouse-ear cress).